We begin with the raw amino-acid sequence, 288 residues long: uncharacterized protein (288 aa).

Residues 1-59 (MDKLNAISIFCKVIETQSFTLAAKQQNISVAMASKLVSQLEEHLKTRLLQRTTRKIMPT) form the HTH lysR-type domain. The segment at residues 19-38 (FTLAAKQQNISVAMASKLVS) is a DNA-binding region (H-T-H motif).

This sequence belongs to the LysR transcriptional regulatory family.

This is an uncharacterized protein from Haemophilus influenzae (strain ATCC 51907 / DSM 11121 / KW20 / Rd).